A 177-amino-acid polypeptide reads, in one-letter code: MSRVAKAPVSIPAGVEVKLDGQLLTVKGKNGELSHTIHNSVEVKQDNNQLTFSPRVGIANADAQSGTARALVNAMVIGVNEGFTKKLQLVGVGYRAQMKGNVLVLSLGFSHPIDHVLPAGVTAECPSQTEIVLKSADKQLIGQVAADIRAYRRPEPYKGKGVRYADEVVRMKEAKKK.

It belongs to the universal ribosomal protein uL6 family. Part of the 50S ribosomal subunit.

Functionally, this protein binds to the 23S rRNA, and is important in its secondary structure. It is located near the subunit interface in the base of the L7/L12 stalk, and near the tRNA binding site of the peptidyltransferase center. The polypeptide is Large ribosomal subunit protein uL6 (Histophilus somni (strain 2336) (Haemophilus somnus)).